The following is a 126-amino-acid chain: Aspartate 1-decarboxylase (126 aa).

The Schiff-base intermediate with substrate; via pyruvic acid role is filled by S25. A Pyruvic acid (Ser) modification is found at S25. Position 57 (T57) interacts with substrate. Catalysis depends on Y58, which acts as the Proton donor. G73–A75 contributes to the substrate binding site.

Belongs to the PanD family. In terms of assembly, heterooctamer of four alpha and four beta subunits. Requires pyruvate as cofactor. In terms of processing, is synthesized initially as an inactive proenzyme, which is activated by self-cleavage at a specific serine bond to produce a beta-subunit with a hydroxyl group at its C-terminus and an alpha-subunit with a pyruvoyl group at its N-terminus.

The protein localises to the cytoplasm. The catalysed reaction is L-aspartate + H(+) = beta-alanine + CO2. It functions in the pathway cofactor biosynthesis; (R)-pantothenate biosynthesis; beta-alanine from L-aspartate: step 1/1. Its function is as follows. Catalyzes the pyruvoyl-dependent decarboxylation of aspartate to produce beta-alanine. The protein is Aspartate 1-decarboxylase of Cellvibrio japonicus (strain Ueda107) (Pseudomonas fluorescens subsp. cellulosa).